The chain runs to 165 residues: Phosphopantetheine adenylyltransferase (165 aa).

Thr-11 is a binding site for substrate. Residues Thr-11–Phe-12 and His-19 each bind ATP. 3 residues coordinate substrate: Lys-43, Thr-79, and Arg-93. ATP-binding positions include Glu-104 and Leu-128–Thr-134.

This sequence belongs to the bacterial CoaD family. As to quaternary structure, homohexamer. The cofactor is Mg(2+).

It is found in the cytoplasm. It catalyses the reaction (R)-4'-phosphopantetheine + ATP + H(+) = 3'-dephospho-CoA + diphosphate. It functions in the pathway cofactor biosynthesis; coenzyme A biosynthesis; CoA from (R)-pantothenate: step 4/5. Functionally, reversibly transfers an adenylyl group from ATP to 4'-phosphopantetheine, yielding dephospho-CoA (dPCoA) and pyrophosphate. In Lactococcus lactis subsp. lactis (strain IL1403) (Streptococcus lactis), this protein is Phosphopantetheine adenylyltransferase.